A 675-amino-acid chain; its full sequence is L-type lectin-domain containing receptor kinase IV.1 (675 aa).

The signal sequence occupies residues 1 to 22 (MFLKLLTIFFFFFFNLIFQSSS). Residues 23–291 (QSLNFAYNNG…EPKRISEFYK (269 aa)) lie on the Extracellular side of the membrane. Residues 25 to 261 (LNFAYNNGFN…SEHYILGWSF (237 aa)) form a legume-lectin like region. Asn57, Asn79, Asn112, Asn134, Asn153, and Asn186 each carry an N-linked (GlcNAc...) asparagine glycan. Residues 292–312 (IGMPLISLFLIFSFIFLVCYI) form a helical membrane-spanning segment. Topologically, residues 313 to 675 (VRRRRKFAEE…IADSQLSGGR (363 aa)) are cytoplasmic. The 278-residue stretch at 347–624 (FKEKGLLGTG…LHYLRGDAKL (278 aa)) folds into the Protein kinase domain. Residues 353–361 (LGTGGFGSV) and Lys376 each bind ATP. Catalysis depends on Asp472, which acts as the Proton acceptor.

This sequence in the C-terminal section; belongs to the protein kinase superfamily. Ser/Thr protein kinase family. It in the N-terminal section; belongs to the leguminous lectin family.

It localises to the membrane. The enzyme catalyses L-seryl-[protein] + ATP = O-phospho-L-seryl-[protein] + ADP + H(+). It catalyses the reaction L-threonyl-[protein] + ATP = O-phospho-L-threonyl-[protein] + ADP + H(+). The chain is L-type lectin-domain containing receptor kinase IV.1 (LECRK41) from Arabidopsis thaliana (Mouse-ear cress).